The sequence spans 420 residues: Histidine--tRNA ligase (420 aa).

It belongs to the class-II aminoacyl-tRNA synthetase family. Homodimer.

The protein resides in the cytoplasm. It catalyses the reaction tRNA(His) + L-histidine + ATP = L-histidyl-tRNA(His) + AMP + diphosphate + H(+). This Streptomyces avermitilis (strain ATCC 31267 / DSM 46492 / JCM 5070 / NBRC 14893 / NCIMB 12804 / NRRL 8165 / MA-4680) protein is Histidine--tRNA ligase.